A 50-amino-acid chain; its full sequence is Small ribosomal subunit protein uS14 (50 aa).

Zn(2+)-binding residues include Cys-15, Cys-18, Cys-33, and Cys-36.

Belongs to the universal ribosomal protein uS14 family. Zinc-binding uS14 subfamily. In terms of assembly, part of the 30S ribosomal subunit. Zn(2+) serves as cofactor.

Binds 16S rRNA, required for the assembly of 30S particles. The polypeptide is Small ribosomal subunit protein uS14 (Methanosarcina barkeri (strain Fusaro / DSM 804)).